Here is a 270-residue protein sequence, read N- to C-terminus: MLTKRIIPCIDVDLDEDGNPAVYTGINFEDLEYTGDPVEMAKQYNMAGADEFVFLDITASAVGRETMLETVSRVADEIFIPLTVGGGIRTRDDIKSTLRAGADKVSINTAALETPELITTGASAFGSQCIVISVDARRRFDEQGENYLSVDGESCWFECTVKGGREGTGIDVLEWVTEAETRGAGELFINSIDADGTQDGYDIPLTSAVCDAVSTPVIASSGCGSPADMHEVFTEAGADAGLAASIFHFGEYSIEATKEYLDERGVPIRT.

Residues Asp-11 and Asp-135 contribute to the active site.

It belongs to the HisA/HisF family. In terms of assembly, heterodimer of HisH and HisF.

The protein localises to the cytoplasm. It carries out the reaction 5-[(5-phospho-1-deoxy-D-ribulos-1-ylimino)methylamino]-1-(5-phospho-beta-D-ribosyl)imidazole-4-carboxamide + L-glutamine = D-erythro-1-(imidazol-4-yl)glycerol 3-phosphate + 5-amino-1-(5-phospho-beta-D-ribosyl)imidazole-4-carboxamide + L-glutamate + H(+). Its pathway is amino-acid biosynthesis; L-histidine biosynthesis; L-histidine from 5-phospho-alpha-D-ribose 1-diphosphate: step 5/9. Functionally, IGPS catalyzes the conversion of PRFAR and glutamine to IGP, AICAR and glutamate. The HisF subunit catalyzes the cyclization activity that produces IGP and AICAR from PRFAR using the ammonia provided by the HisH subunit. The polypeptide is Imidazole glycerol phosphate synthase subunit HisF (Haloquadratum walsbyi (strain DSM 16790 / HBSQ001)).